A 254-amino-acid chain; its full sequence is Alcohol dehydrogenase 1 (254 aa).

10–33 provides a ligand contact to NAD(+); that stretch reads FVAGLGGIGFDTSREIVKKGPKNL. Residue Ser138 coordinates substrate. The Proton acceptor role is filled by Tyr151.

Belongs to the short-chain dehydrogenases/reductases (SDR) family. Homodimer.

The enzyme catalyses a primary alcohol + NAD(+) = an aldehyde + NADH + H(+). It catalyses the reaction a secondary alcohol + NAD(+) = a ketone + NADH + H(+). In Drosophila mojavensis (Fruit fly), this protein is Alcohol dehydrogenase 1 (Adh1).